The following is a 599-amino-acid chain: 1-deoxy-D-xylulose-5-phosphate synthase (599 aa).

Thiamine diphosphate contacts are provided by residues His63 and 104 to 106; that span reads GHS. Asp135 lines the Mg(2+) pocket. Thiamine diphosphate-binding positions include 136-137, Asn164, Tyr271, and Glu352; that span reads GA. Residue Asn164 participates in Mg(2+) binding.

The protein belongs to the transketolase family. DXPS subfamily. Homodimer. Mg(2+) serves as cofactor. Requires thiamine diphosphate as cofactor.

It carries out the reaction D-glyceraldehyde 3-phosphate + pyruvate + H(+) = 1-deoxy-D-xylulose 5-phosphate + CO2. It functions in the pathway metabolic intermediate biosynthesis; 1-deoxy-D-xylulose 5-phosphate biosynthesis; 1-deoxy-D-xylulose 5-phosphate from D-glyceraldehyde 3-phosphate and pyruvate: step 1/1. Catalyzes the acyloin condensation reaction between C atoms 2 and 3 of pyruvate and glyceraldehyde 3-phosphate to yield 1-deoxy-D-xylulose-5-phosphate (DXP). In Nitratiruptor sp. (strain SB155-2), this protein is 1-deoxy-D-xylulose-5-phosphate synthase.